The chain runs to 185 residues: Ribonuclease HII (185 aa).

The RNase H type-2 domain maps to 1-185 (MKICGIDEAG…LKHLQGILEF (185 aa)). Asp-7, Glu-8, and Asp-96 together coordinate a divalent metal cation.

The protein belongs to the RNase HII family. It depends on Mn(2+) as a cofactor. Mg(2+) serves as cofactor.

The protein resides in the cytoplasm. It catalyses the reaction Endonucleolytic cleavage to 5'-phosphomonoester.. Functionally, endonuclease that specifically degrades the RNA of RNA-DNA hybrids. This chain is Ribonuclease HII, found in Campylobacter hominis (strain ATCC BAA-381 / DSM 21671 / CCUG 45161 / LMG 19568 / NCTC 13146 / CH001A).